The following is a 77-amino-acid chain: Acyl carrier protein (77 aa).

A Carrier domain is found at 1-76 (MADFEKIKSI…DVIKFIDKLK (76 aa)). Ser36 is modified (O-(pantetheine 4'-phosphoryl)serine).

It belongs to the acyl carrier protein (ACP) family. 4'-phosphopantetheine is transferred from CoA to a specific serine of apo-ACP by AcpS. This modification is essential for activity because fatty acids are bound in thioester linkage to the sulfhydryl of the prosthetic group.

Its subcellular location is the cytoplasm. It participates in lipid metabolism; fatty acid biosynthesis. Carrier of the growing fatty acid chain in fatty acid biosynthesis. This chain is Acyl carrier protein, found in Leptospira biflexa serovar Patoc (strain Patoc 1 / Ames).